A 451-amino-acid chain; its full sequence is uncharacterized protein (451 aa).

An N-terminal signal peptide occupies residues 1-22; the sequence is MKLKLIFSLFLVLVFCSLFVFG. Residues asparagine 25, asparagine 45, asparagine 209, asparagine 326, and asparagine 402 are each glycosylated (N-linked (GlcNAc...) asparagine).

It localises to the secreted. This is an uncharacterized protein from Dictyostelium discoideum (Social amoeba).